The chain runs to 482 residues: MEKKMKEEEEEPLSPMARAFQEPSIDCGIVIKFGCKTKINPDVIVDSLKLNVFKHPRFCSLLDDDGTKWLRTDVVNVEEHVFVPDIDPKLTEEDVEWFVEDYISSITMIPLDRTKPLWEVHILNAKTSDAEAICVIRCHHALGDGVSILSLILASTRKTSEPEAFSTLPVPKCRESYNHRRGFSFFRLVLVVCSTVRLIWNTLVDSFLCMATIFFLKDTDTPLKGKPGAIKKFSHRIVSLDDIKLIKNAMEMTINDVLLGVTEAALTRYLHQSYDKTNEEAGTSLTPNRQDLLDRIRLRSLIVVNLRPTGSQSIADMMAKGSKCRWGNYISVILFPFTIALQSDPLVYLSNVKSMIDRKKNSLITYIIYTFSEFVIKAFGINVAVAFQRKIMLNTTMCISNLPGPTEEVSFHGHPIAYFAPSIYGLPQALTIHYLSYANKMIISVAVDPMIIDAHKLCDELEESLKNMKLAILEKGLPNHVN.

Residues 1 to 195 (MEKKMKEEEE…FRLVLVVCST (195 aa)) lie on the Cytoplasmic side of the membrane. His140 acts as the Proton acceptor in catalysis. A helical membrane pass occupies residues 196 to 216 (VRLIWNTLVDSFLCMATIFFL). At 217–328 (KDTDTPLKGK…AKGSKCRWGN (112 aa)) the chain is on the lumenal side. A helical membrane pass occupies residues 329–349 (YISVILFPFTIALQSDPLVYL). Residues 350-366 (SNVKSMIDRKKNSLITY) are Cytoplasmic-facing. The helical transmembrane segment at 367-387 (IIYTFSEFVIKAFGINVAVAF) threads the bilayer. Residues 388–482 (QRKIMLNTTM…LEKGLPNHVN (95 aa)) are Lumenal-facing. Asn394 carries N-linked (GlcNAc...) asparagine glycosylation.

In the N-terminal section; belongs to the long-chain O-acyltransferase family. As to expression, mostly expressed in stems and siliques.

Its subcellular location is the cell membrane. It localises to the endoplasmic reticulum membrane. It catalyses the reaction an acyl-CoA + a 1,2-diacyl-sn-glycerol = a triacyl-sn-glycerol + CoA. It carries out the reaction a long chain fatty alcohol + a fatty acyl-CoA = a wax ester + CoA. The protein operates within glycerolipid metabolism; triacylglycerol biosynthesis. It functions in the pathway lipid metabolism. Bifunctional wax ester synthase/diacylglycerol acyltransferase. Involved in cuticular wax biosynthesis. This is Wax ester synthase/diacylglycerol acyltransferase 9 from Arabidopsis thaliana (Mouse-ear cress).